Here is a 283-residue protein sequence, read N- to C-terminus: MTAQLIDGNALSRQLRADVARRAALLKERGTTPGLAVVLVGDNPASQVYVRNKVKACEESGLHSVLEKYDAAMSEAELLARVDALNNDPSIHGILVQLPLPAHIDAQKVIEAISPAKDVDGFHIASAGALMTGMPGFWPCTPYGCMKMLEHIGYDLRGKHAVVIGRSNIVGKPMALMLLAKDATVTVCHSRTADLKAQTLQADVIVAAVGRRNVLTADMVKPGAVVIDVGMNRNDEGRLCGDVDFDGVREVAGHITPVPGGVGPMTITMLLVNTLEAAERAAG.

NADP(+)-binding positions include G165–S167 and S190.

It belongs to the tetrahydrofolate dehydrogenase/cyclohydrolase family. As to quaternary structure, homodimer.

It carries out the reaction (6R)-5,10-methylene-5,6,7,8-tetrahydrofolate + NADP(+) = (6R)-5,10-methenyltetrahydrofolate + NADPH. The catalysed reaction is (6R)-5,10-methenyltetrahydrofolate + H2O = (6R)-10-formyltetrahydrofolate + H(+). It functions in the pathway one-carbon metabolism; tetrahydrofolate interconversion. Functionally, catalyzes the oxidation of 5,10-methylenetetrahydrofolate to 5,10-methenyltetrahydrofolate and then the hydrolysis of 5,10-methenyltetrahydrofolate to 10-formyltetrahydrofolate. This is Bifunctional protein FolD from Paracidovorax citrulli (strain AAC00-1) (Acidovorax citrulli).